The chain runs to 618 residues: Nuclear cap-binding protein subunit 3 (618 aa).

The interval 1–53 (MAAVRGLRVSVKAGGGAEPEPMEVEEGEVEAAAGRTSPVEATADQTSPREVVP) is disordered. The segment covering 20-29 (EPMEVEEGEV) has biased composition (acidic residues). The tract at residues 117–178 (ETLYICGVDE…LSSKPTNEKG (62 aa)) is RNA recognition motif (RRM) domain. The WLDD motif; essential for 7-methylguanosine-containing mRNA cap binding motif lies at 146-149 (WLDD). Disordered regions lie at residues 170–250 (SSKP…DLRP), 342–366 (PEEPIEEEEEEEEEEEEDMDEDDRV), and 426–618 (QLKT…DTDS). The segment covering 174–188 (TNEKGQRKKDGEHRS) has biased composition (basic and acidic residues). A compositionally biased stretch (acidic residues) spans 205 to 223 (DETEEGEVEEDNPNDAEVE). Residues 231–240 (PPETLSQAEQ) are compositionally biased toward polar residues. The span at 344 to 365 (EPIEEEEEEEEEEEEDMDEDDR) shows a compositional bias: acidic residues. A compositionally biased stretch (polar residues) spans 436-450 (SDSAGNSVKSRIGSK). Residues 451–468 (SHSEKPADVRLILEEKRQ) show a composition bias toward basic and acidic residues. Residues 469 to 481 (STASRQQSSSSGK) are compositionally biased toward low complexity. Composition is skewed to basic and acidic residues over residues 507–517 (SRREPLSDVHS), 550–562 (PKEKDRASEKSGE), and 583–596 (IKEKEQIRQKKSRL). Residues 609 to 618 (ESSSGSDTDS) show a composition bias toward low complexity.

The protein belongs to the NCBP3 family. Component of an alternative cap-binding complex (CBC) composed of NCBP1/CBP80 and NCBP3.

It is found in the nucleus. The protein resides in the cytoplasm. Functionally, associates with NCBP1/CBP80 to form an alternative cap-binding complex (CBC) which plays a key role in mRNA export. NCBP3 serves as adapter protein linking the capped RNAs (m7GpppG-capped RNA) to NCBP1/CBP80. Unlike the conventional CBC with NCBP2 which binds both small nuclear RNA (snRNA) and messenger (mRNA) and is involved in their export from the nucleus, the alternative CBC with NCBP3 does not bind snRNA and associates only with mRNA thereby playing a role in only mRNA export. The protein is Nuclear cap-binding protein subunit 3 of Xenopus laevis (African clawed frog).